Reading from the N-terminus, the 425-residue chain is MDTSAIQQTLVKIYQRQAWQPPRKASKNETTVGKPRELAGGGSPADGGFRPSRVVVVAKTTRYEFEQQRYRYAELSEEDLKQLLALKGSSYSGLLERHHIHTKNVEHIIDSLRDEGIEVRLVKRREYDEETVRWADAVIAAGGDGTMLLAASKVLDRLKPVIGVNTDPERSEGHLCLPVRYTHSFPEALQKFSRGEFRWLWRQRIRLYLEGTGINPSPVDLHEQQLSLNQHSRAFNIERVDDERSEASGPQLLPVRALNEVFIGESLSSRASYYEISVDDGPWEKQKSSGLNLCTGTGSKAWSFNINRVAAQAVEDVLNIARRQGNLTLPLNKELVEKVTNEYNESLLYSPEEPKILFSIREPIANRVFSSSRQRCFSSKVCVRSRCWDACMVVDGGTSFEFNDGAIASMMINKEDELRTVILEQ.

A mitochondrion-targeting transit peptide spans 1–45; the sequence is MDTSAIQQTLVKIYQRQAWQPPRKASKNETTVGKPRELAGGGSPA. Residues 20–46 form a disordered region; the sequence is QPPRKASKNETTVGKPRELAGGGSPAD. K59 bears the N6-acetyllysine; alternate mark. K59 is subject to N6-succinyllysine; alternate. S171 carries the post-translational modification Phosphoserine. Residue K285 is modified to N6-succinyllysine. The residue at position 300 (K300) is an N6-acetyllysine; alternate. Position 300 is an N6-succinyllysine; alternate (K300). At S350 the chain carries Phosphoserine. Position 380 is an N6-acetyllysine (K380).

Belongs to the NAD kinase family. Homodimer.

It localises to the mitochondrion. It carries out the reaction NAD(+) + ATP = ADP + NADP(+) + H(+). Its activity is regulated as follows. Inhibited by NADH, NADPH and NADP(+). Its function is as follows. Mitochondrial NAD(+) kinase that phosphorylates NAD(+) to yield NADP(+). Can use both ATP or inorganic polyphosphate as the phosphoryl donor. This is NAD kinase 2, mitochondrial (Nadk2) from Rattus norvegicus (Rat).